A 141-amino-acid polypeptide reads, in one-letter code: Large ribosomal subunit protein uL11 (141 aa).

It belongs to the universal ribosomal protein uL11 family. Part of the ribosomal stalk of the 50S ribosomal subunit. Interacts with L10 and the large rRNA to form the base of the stalk. L10 forms an elongated spine to which L12 dimers bind in a sequential fashion forming a multimeric L10(L12)X complex. Post-translationally, one or more lysine residues are methylated.

In terms of biological role, forms part of the ribosomal stalk which helps the ribosome interact with GTP-bound translation factors. The protein is Large ribosomal subunit protein uL11 of Streptococcus gordonii (strain Challis / ATCC 35105 / BCRC 15272 / CH1 / DL1 / V288).